The chain runs to 500 residues: Cytochrome P450 2D27 (500 aa).

C446 is a binding site for heme.

It belongs to the cytochrome P450 family. Heme is required as a cofactor. In terms of tissue distribution, expressed in liver, but not in kidney, small intestine, and brain.

It is found in the endoplasmic reticulum membrane. Its subcellular location is the microsome membrane. Its function is as follows. Has bufuralol 1'-hydroxylase and debrisoquine 4-hydroxylase activities. In Mesocricetus auratus (Golden hamster), this protein is Cytochrome P450 2D27 (CYP2D27).